Reading from the N-terminus, the 121-residue chain is Ribosome-binding factor A (121 aa).

The protein belongs to the RbfA family. Monomer. Binds 30S ribosomal subunits, but not 50S ribosomal subunits or 70S ribosomes.

Its subcellular location is the cytoplasm. In terms of biological role, one of several proteins that assist in the late maturation steps of the functional core of the 30S ribosomal subunit. Associates with free 30S ribosomal subunits (but not with 30S subunits that are part of 70S ribosomes or polysomes). Required for efficient processing of 16S rRNA. May interact with the 5'-terminal helix region of 16S rRNA. In Lactobacillus acidophilus (strain ATCC 700396 / NCK56 / N2 / NCFM), this protein is Ribosome-binding factor A.